Reading from the N-terminus, the 149-residue chain is SsrA-binding protein (149 aa).

It belongs to the SmpB family.

The protein localises to the cytoplasm. In terms of biological role, required for rescue of stalled ribosomes mediated by trans-translation. Binds to transfer-messenger RNA (tmRNA), required for stable association of tmRNA with ribosomes. tmRNA and SmpB together mimic tRNA shape, replacing the anticodon stem-loop with SmpB. tmRNA is encoded by the ssrA gene; the 2 termini fold to resemble tRNA(Ala) and it encodes a 'tag peptide', a short internal open reading frame. During trans-translation Ala-aminoacylated tmRNA acts like a tRNA, entering the A-site of stalled ribosomes, displacing the stalled mRNA. The ribosome then switches to translate the ORF on the tmRNA; the nascent peptide is terminated with the 'tag peptide' encoded by the tmRNA and targeted for degradation. The ribosome is freed to recommence translation, which seems to be the essential function of trans-translation. In Anaplasma marginale (strain Florida), this protein is SsrA-binding protein.